The chain runs to 314 residues: Aromatic prenyltransferase (314 aa).

Belongs to the aromatic prenyltransferase family.

Functionally, prenyltransferase that attaches isoprenoid moieties to carbon atoms of aromatic substrates in an enzyme-catalyzed Friedel-Crafts reaction. This chain is Aromatic prenyltransferase, found in Arthroderma otae (strain ATCC MYA-4605 / CBS 113480) (Microsporum canis).